The sequence spans 620 residues: Sodium-dependent dopamine transporter (620 aa).

The Cytoplasmic portion of the chain corresponds to 1–56 (MSKSKCSVGLMSSVVAPAKEPNAVGPKEVELILVKEQNGVQLTSSTLTNPRQSPVE). The discontinuously helical transmembrane segment at 57 to 95 (AQDRETWGKKIDFLLSVIGFAVDLANVWRFPYLCYKNGG) threads the bilayer. Residues G75, A77, V78, D79, and N82 each coordinate Na(+). D79 contributes to the dopamine binding site. 2 helical membrane passes run 96–127 (GAFLVPYLLFMVIAGMPLFYMELALGQFNREG) and 128–171 (AAGV…FSSF). Dopamine contacts are provided by S149 and G153. Residues 172–236 (TTELPWIHCN…SHGIDDLGPP (65 aa)) lie on the Extracellular side of the membrane. A disulfide bridge links C180 with C189. 3 N-linked (GlcNAc...) asparagine glycosylation sites follow: N181, N188, and N205. The next 2 helical transmembrane spans lie at 237–256 (RWQLTACLVLVIVLLYFSLW) and 257–287 (KGVKTSGKVVWITATMPYVVLTALLLRGVTL). The Extracellular segment spans residues 288-306 (PGAIDGIRAYLSVDFYRLC). The discontinuously helical transmembrane segment at 307-335 (EASVWIDAATQVCFSLGVGFGVLIAFSSY) threads the bilayer. Q317 lines the chloride pocket. Residue F320 participates in dopamine binding. S321 and N353 together coordinate Na(+). S321 provides a ligand contact to chloride. A helical membrane pass occupies residues 336–376 (NKFTNNCYRDAIVTTSINSLTSFSSGFVVFSFLGYMAQKHS). S357 provides a ligand contact to chloride. At 377 to 400 (VPIGDVAKDGPGLIFIIYPEAIAT) the chain is on the extracellular side. The next 3 membrane-spanning stretches (helical) occupy residues 401 to 442 (LPLS…QLLH), 443 to 466 (RHRELFTLFIVLATFLLSLFCVTN), and 467 to 499 (GGIYVFTLLDHFAAGTSILFGVLIEAIGVAWFY). Na(+)-binding residues include L418, D421, and S422. S422 and A423 together coordinate dopamine. Topologically, residues 500 to 516 (GVGQFSDDIQQMTGQRP) are cytoplasmic. The chain crosses the membrane as a helical span at residues 517 to 542 (SLYWRLCWKLVSPCFLLFVVVVSIVT). Residues 543 to 553 (FRPPHYGAYIF) lie on the Extracellular side of the membrane. A helical membrane pass occupies residues 554-583 (PDWANALGWVIATSSMAMVPIYAAYKFCSL). Residues 561 to 590 (GWVIATSSMAMVPIYAAYKFCSLPGSFREK) are interaction with TGFB1I1. The Cytoplasmic segment spans residues 584 to 620 (PGSFREKLAYAIAPEKDRELVDRGEVRQFTLRHWLKV).

Belongs to the sodium:neurotransmitter symporter (SNF) (TC 2.A.22) family. SLC6A3 subfamily. Monomer. Homooligomer; disulfide-linked. Interacts with PRKCABP and TGFB1I1. Interacts (via N-terminus) with SYNGR3 (via N-terminus). Interacts with SLC18A2. Interacts with TOR1A (ATP-bound); TOR1A regulates SLC6A3 subcellular location. Interacts with alpha-synuclein/SNCA. Interacts with SEPTIN4. As to expression, highly expressed in substantia nigra. Expressed in axonal varicosities in dopaminergic nerve terminals (at protein level). Expressed in the striatum (at protein level).

It localises to the cell membrane. The protein localises to the cell projection. Its subcellular location is the neuron projection. The protein resides in the axon. It carries out the reaction dopamine(out) + chloride(out) + Na(+)(out) = dopamine(in) + chloride(in) + Na(+)(in). The enzyme catalyses dopamine(out) + chloride(out) + 2 Na(+)(out) = dopamine(in) + chloride(in) + 2 Na(+)(in). It catalyses the reaction (R)-noradrenaline(out) + chloride(out) + Na(+)(out) = (R)-noradrenaline(in) + chloride(in) + Na(+)(in). Its activity is regulated as follows. Inhibited by cocaine, which occupies the same binding site as dopamine. Inhibited by zinc ions. Enhanced by the antibiotic valinomycin. Inhibited by benztropine. Inhibited by GBR 12909 dihydrochloride and amphetamine. Inhibited by mazindol, GBR 12783 dihydrochloride, nomifensine, diclofensine, amfonelic acid, Lu 19005, Win-35428, bupropion and ritalin. In terms of biological role, mediates sodium- and chloride-dependent transport of dopamine. Also mediates sodium- and chloride-dependent transport of norepinephrine (also known as noradrenaline). Regulator of light-dependent retinal hyaloid vessel regression, downstream of OPN5 signaling. The polypeptide is Sodium-dependent dopamine transporter (SLC6A3) (Homo sapiens (Human)).